The sequence spans 310 residues: Protein FAM153A (310 aa).

Disordered stretches follow at residues 39–58, 108–136, 156–184, and 250–297; these read LGVP…LCPP, QTNG…HTME, SYNG…DLEE, and TITG…KKSR. Residues 259–268 are compositionally biased toward low complexity; that stretch reads SASPSSAPAE. A compositionally biased stretch (basic and acidic residues) spans 270–282; sequence ATEKTKVEEEVKT. Over residues 283 to 297 the composition is skewed to basic residues; the sequence is RKPKKKTRKPSKKSR.

Belongs to the FAM153 family.

In Homo sapiens (Human), this protein is Protein FAM153A (FAM153A).